Reading from the N-terminus, the 460-residue chain is V-type ATP synthase beta chain (460 aa).

The protein belongs to the ATPase alpha/beta chains family.

Produces ATP from ADP in the presence of a proton gradient across the membrane. The V-type beta chain is a regulatory subunit. In Dictyoglomus turgidum (strain DSM 6724 / Z-1310), this protein is V-type ATP synthase beta chain.